The following is a 325-amino-acid chain: MNRTDLFKGYERLESQFELQGIDGMLTALAPVFDHPRGNTLKYTKALEGLPETIASIVDLDRDAPRVGVDSDLSFGQHQQLYQSLFQLCPWRKGPFEFFGIDLDAEWQSNIKWDRFAGRISALTHRRVLDIGSSNGYYMFRMASQKPRLVLGLEPQHTFYFQFHAVNQYAGQANLFALPIAFDAMPVTRGFFDTVFCMGVLYHRRSPLGMLRKIHDMMQIGGELVLENLVLESREDLCLFPEDRYAKMRNVFFIPSLKVMESWLKRAGFAEVSCIDISLTTPGEQRKTDWIQTESLDDFLDPRDRSRTVEGYPAPVRAVFTARAI.

Carboxy-S-adenosyl-L-methionine is bound by residues Lys-93, Trp-107, Lys-112, Gly-132, Met-198, Tyr-202, and Arg-317.

This sequence belongs to the class I-like SAM-binding methyltransferase superfamily. CmoB family. Homotetramer.

It carries out the reaction carboxy-S-adenosyl-L-methionine + 5-hydroxyuridine(34) in tRNA = 5-carboxymethoxyuridine(34) in tRNA + S-adenosyl-L-homocysteine + H(+). In terms of biological role, catalyzes carboxymethyl transfer from carboxy-S-adenosyl-L-methionine (Cx-SAM) to 5-hydroxyuridine (ho5U) to form 5-carboxymethoxyuridine (cmo5U) at position 34 in tRNAs. This is tRNA U34 carboxymethyltransferase from Desulforapulum autotrophicum (strain ATCC 43914 / DSM 3382 / VKM B-1955 / HRM2) (Desulfobacterium autotrophicum).